Here is a 481-residue protein sequence, read N- to C-terminus: p-aminobenzoyl-glutamate hydrolase subunit B (481 aa).

As to quaternary structure, forms a heterodimer with AbgA. The cofactor is Mn(2+).

In terms of biological role, component of the p-aminobenzoyl-glutamate hydrolase multicomponent enzyme system which catalyzes the cleavage of p-aminobenzoyl-glutamate (PABA-GLU) to form p-aminobenzoate (PABA) and glutamate. AbgAB does not degrade dipeptides and the physiological role of abgABT should be clarified. The protein is p-aminobenzoyl-glutamate hydrolase subunit B (abgB) of Escherichia coli (strain K12).